Here is a 151-residue protein sequence, read N- to C-terminus: 3-hydroxyacyl-[acyl-carrier-protein] dehydratase FabZ (151 aa).

Residue His54 is part of the active site.

Belongs to the thioester dehydratase family. FabZ subfamily.

The protein resides in the cytoplasm. The enzyme catalyses a (3R)-hydroxyacyl-[ACP] = a (2E)-enoyl-[ACP] + H2O. Involved in unsaturated fatty acids biosynthesis. Catalyzes the dehydration of short chain beta-hydroxyacyl-ACPs and long chain saturated and unsaturated beta-hydroxyacyl-ACPs. The polypeptide is 3-hydroxyacyl-[acyl-carrier-protein] dehydratase FabZ (Buchnera aphidicola subsp. Acyrthosiphon pisum (strain 5A)).